A 102-amino-acid chain; its full sequence is NADH-quinone oxidoreductase subunit K (102 aa).

Transmembrane regions (helical) follow at residues 5–25, 31–51, and 62–82; these read LGHF…GIFL, IVLL…FVAF, and IFVF…LAIL.

This sequence belongs to the complex I subunit 4L family. As to quaternary structure, NDH-1 is composed of 14 different subunits. Subunits NuoA, H, J, K, L, M, N constitute the membrane sector of the complex.

The protein localises to the cell inner membrane. The enzyme catalyses a quinone + NADH + 5 H(+)(in) = a quinol + NAD(+) + 4 H(+)(out). Functionally, NDH-1 shuttles electrons from NADH, via FMN and iron-sulfur (Fe-S) centers, to quinones in the respiratory chain. The immediate electron acceptor for the enzyme in this species is believed to be ubiquinone. Couples the redox reaction to proton translocation (for every two electrons transferred, four hydrogen ions are translocated across the cytoplasmic membrane), and thus conserves the redox energy in a proton gradient. The polypeptide is NADH-quinone oxidoreductase subunit K (Albidiferax ferrireducens (strain ATCC BAA-621 / DSM 15236 / T118) (Rhodoferax ferrireducens)).